The primary structure comprises 379 residues: Lipid-A-disaccharide synthase (379 aa).

It belongs to the LpxB family.

It carries out the reaction a lipid X + a UDP-2-N,3-O-bis[(3R)-3-hydroxyacyl]-alpha-D-glucosamine = a lipid A disaccharide + UDP + H(+). It functions in the pathway bacterial outer membrane biogenesis; LPS lipid A biosynthesis. Condensation of UDP-2,3-diacylglucosamine and 2,3-diacylglucosamine-1-phosphate to form lipid A disaccharide, a precursor of lipid A, a phosphorylated glycolipid that anchors the lipopolysaccharide to the outer membrane of the cell. In Pseudomonas fluorescens (strain SBW25), this protein is Lipid-A-disaccharide synthase.